Consider the following 402-residue polypeptide: NADH-quinone oxidoreductase subunit D (402 aa).

It belongs to the complex I 49 kDa subunit family. In terms of assembly, NDH-1 is composed of 14 different subunits. Subunits NuoB, C, D, E, F, and G constitute the peripheral sector of the complex.

Its subcellular location is the cell inner membrane. The enzyme catalyses a quinone + NADH + 5 H(+)(in) = a quinol + NAD(+) + 4 H(+)(out). Its function is as follows. NDH-1 shuttles electrons from NADH, via FMN and iron-sulfur (Fe-S) centers, to quinones in the respiratory chain. The immediate electron acceptor for the enzyme in this species is believed to be ubiquinone. Couples the redox reaction to proton translocation (for every two electrons transferred, four hydrogen ions are translocated across the cytoplasmic membrane), and thus conserves the redox energy in a proton gradient. The chain is NADH-quinone oxidoreductase subunit D from Rhodopseudomonas palustris (strain ATCC BAA-98 / CGA009).